The chain runs to 585 residues: ATP-dependent lipid A-core flippase (585 aa).

Helical transmembrane passes span 23-43 (LAFGVAIIGMVGYSLIDAYVI), 64-84 (IAAYFVIPVFIARGIFNFMGT), 140-160 (AFLTLVREGALVFGLLFWMFY), 163-183 (WQLSLVFILIGPLVAMIVSVV), 247-267 (ILSVSSIQVIASVALAVVLYI), and 273-293 (FITDLTPGTFVTVVVAMTMLL). The ABC transmembrane type-1 domain maps to 27–308 (VAIIGMVGYS…LTTVNSEFQK (282 aa)). One can recognise an ABC transporter domain in the interval 340–576 (LEFRDVTFHY…DGAYAQLHKL (237 aa)). 374 to 381 (GRSGSGKS) is an ATP binding site.

This sequence belongs to the ABC transporter superfamily. Lipid exporter (TC 3.A.1.106) family. In terms of assembly, homodimer.

The protein resides in the cell inner membrane. It carries out the reaction ATP + H2O + lipid A-core oligosaccharideSide 1 = ADP + phosphate + lipid A-core oligosaccharideSide 2.. In terms of biological role, involved in lipopolysaccharide (LPS) biosynthesis. Translocates lipid A-core from the inner to the outer leaflet of the inner membrane. Transmembrane domains (TMD) form a pore in the inner membrane and the ATP-binding domain (NBD) is responsible for energy generation. The protein is ATP-dependent lipid A-core flippase of Pseudoalteromonas atlantica (strain T6c / ATCC BAA-1087).